The sequence spans 166 residues: Eukaryotic translation initiation factor 5A (166 aa).

Residue K52 is modified to Hypusine. The interval 99 to 125 is disordered; sequence DREDPSKPAHLSLMDDEGETRDNLDMP.

It belongs to the eIF-5A family. Lys-52 undergoes hypusination, a unique post-translational modification that consists in the addition of a butylamino group from spermidine to lysine side chain, leading to the formation of the unusual amino acid hypusine. eIF-5As are the only known proteins to undergo this modification, which is essential for their function. Hypusination is mediated by the consecutive action of deoxyhypusine synthase DHSc and deoxyhypusine hydroxylase DOHH.

The protein resides in the cytoplasm. Functionally, translation factor that promotes translation elongation and termination, particularly upon ribosome stalling at specific amino acid sequence contexts. Binds between the exit (E) and peptidyl (P) site of the ribosome and promotes rescue of stalled ribosome: specifically required for efficient translation of polyproline-containing peptides as well as other motifs that stall the ribosome. Acts as a ribosome quality control (RQC) cofactor by joining the RQC complex to facilitate peptidyl transfer during CAT tailing step. Required for cell growth during both bloodstream (BF) and insect procyclic (PF) life cycle stages and for survival of the bloodstream form. The sequence is that of Eukaryotic translation initiation factor 5A from Trypanosoma brucei brucei (strain 927/4 GUTat10.1).